Reading from the N-terminus, the 714-residue chain is Interferon-induced GTP-binding protein Mx2 (714 aa).

The tract at residues 1 to 89 is disordered; sequence MSMSYRALKF…QRSKGSENNL (89 aa). 2 stretches are compositionally biased toward polar residues: residues 61-70 and 79-88; these read NNFNQLNLDP and QQRSKGSENN. Positions 115 to 386 constitute a Dynamin-type G domain; sequence DLALPAIAVI…LIWHINKSLP (272 aa). The segment at 125 to 132 is G1 motif; the sequence is GDQSSGKS. 125–132 is a binding site for GTP; the sequence is GDQSSGKS. The tract at residues 150–152 is G2 motif; sequence ITR. Residues 224–227 are G3 motif; that stretch reads DLPG. GTP-binding positions include 224 to 228 and 293 to 296; these read DLPGI and TKPD. The tract at residues 293–296 is G4 motif; the sequence is TKPD. The tract at residues 325-328 is G5 motif; sequence KCRG. In terms of domain architecture, GED spans 622–713; the sequence is IVEIGVHLNA…ALYEFPHFKS (92 aa).

This sequence belongs to the TRAFAC class dynamin-like GTPase superfamily. Dynamin/Fzo/YdjA family.

It localises to the cytoplasm. It is found in the nucleus. Functionally, interferon-induced dynamin-like GTPase with antiviral activity. The sequence is that of Interferon-induced GTP-binding protein Mx2 (MX2) from Ovis aries (Sheep).